Reading from the N-terminus, the 466-residue chain is Cysteine--tRNA ligase 1 (466 aa).

Cys-27 lines the Zn(2+) pocket. Residues 29 to 39 (PTVQSPPHIGH) carry the 'HIGH' region motif. Zn(2+) is bound by residues Cys-211, His-236, and Glu-240. Residues 267–271 (KMSKS) carry the 'KMSKS' region motif. Lys-270 provides a ligand contact to ATP.

This sequence belongs to the class-I aminoacyl-tRNA synthetase family. Monomer. Zn(2+) is required as a cofactor.

The protein resides in the cytoplasm. The enzyme catalyses tRNA(Cys) + L-cysteine + ATP = L-cysteinyl-tRNA(Cys) + AMP + diphosphate. The polypeptide is Cysteine--tRNA ligase 1 (Tropheryma whipplei (strain TW08/27) (Whipple's bacillus)).